The following is a 423-amino-acid chain: UDP-N-acetylglucosamine 1-carboxyvinyltransferase 2 (423 aa).

23–24 (KN) contacts phosphoenolpyruvate. Arg96 lines the UDP-N-acetyl-alpha-D-glucosamine pocket. Cys120 serves as the catalytic Proton donor. Residue Cys120 is modified to 2-(S-cysteinyl)pyruvic acid O-phosphothioketal. UDP-N-acetyl-alpha-D-glucosamine is bound by residues 125–129 (RPIDL), Asp309, and Val331.

This sequence belongs to the EPSP synthase family. MurA subfamily.

Its subcellular location is the cytoplasm. It carries out the reaction phosphoenolpyruvate + UDP-N-acetyl-alpha-D-glucosamine = UDP-N-acetyl-3-O-(1-carboxyvinyl)-alpha-D-glucosamine + phosphate. It participates in cell wall biogenesis; peptidoglycan biosynthesis. Functionally, cell wall formation. Adds enolpyruvyl to UDP-N-acetylglucosamine. The polypeptide is UDP-N-acetylglucosamine 1-carboxyvinyltransferase 2 (Streptococcus agalactiae serotype Ia (strain ATCC 27591 / A909 / CDC SS700)).